Consider the following 254-residue polypeptide: UstYa family oxidase phomYc' (254 aa).

A helical membrane pass occupies residues 38-58; that stretch reads LVLVLQSVLIISLLASLHILG. N-linked (GlcNAc...) asparagine glycosylation occurs at N64. Residues 138 to 142 carry the HXXHC 1 motif; it reads HQLHC. N159 is a glycosylation site (N-linked (GlcNAc...) asparagine). An HXXHC 2 motif is present at residues 173-177; sequence HIDHC.

Belongs to the ustYa family.

The protein localises to the membrane. It participates in mycotoxin biosynthesis. Functionally, ustYa family oxidase; part of the gene cluster that mediates the biosynthesis of the phomopsins, a group of hexapeptide mycotoxins which infects lupins and causes lupinosis disease in livestock. Within the pathway, phomYc' catalyzes the desaturation of the Ile moiety into 2,3-dehydroisoleucine (dIle). The pathway starts with the processing of the precursor phomA' by several endopeptidases including kexin proteases as well as the cluster-specific S41 family peptidase phomP1 and the oligopeptidase phomG' to produce 10 identical copies of the hexapeptide Tyr-Val-Ile-Pro-Ile-Asp. After being excised from the precursor peptide, the core peptides are cyclized and modified post-translationally by enzymes encoded within the gene cluster. The timing and order of proteolysis of the phomA' precursor and PTMs are still unknown. Two tyrosinase-like enzymes, phomQ1' and phomQ2, catalyze the chlorination and hydroxylation of Tyr, respectively. PhomYb, is proposed to be involved in the construction of the macrocyclic structure. The other 4 ustYa family proteins may be involved in PTMs that generate the unique structure of phomopsin A. PhomYa' is required for the hydroxylation of C-beta of Tyr. PhomYc', phomYd', and phomYe are responsible for the biosynthesis of 2,3-dehydroisoleucine (dIle), 2,3-dehydroaspartic acid (dAsp), and 3,4-dehydroproline (dPro), respectively. While dIle formation by phomYc' is indispensable for the installation of dAsp by phomYd', the order of the other PTMs have not been elucidated yet. Most of the biosynthetic enzymes likely have broad substrate specificity, and thus, there might be a metabolic grid from a precursor to phomopsin A. The enzyme(s) responsible for the biosynthesis of 3,4-dehydrovaline (dVal) have also not been identified yet. Finally, phomM' acts as an S-adenosylmethionine-dependent alpha-N-methyltransferase that catalyzes two successive N-methylation reactions, converting N-desmethyl-phomopsin A to phomopsin A and phomopsin A further to an N,N-dimethylated congener called phomopsin E. The chain is UstYa family oxidase phomYc' from Diaporthe leptostromiformis (Lupinosis disease fungus).